Consider the following 239-residue polypeptide: EF-hand domain-containing protein D2 (239 aa).

The interval 1–51 (MATDELASKLSRRLQMEDEGGEATEQPGLNGAAAAAAEAPDETAQALGSAD) is disordered. Residue Ala2 is modified to N-acetylalanine. Ser11 is subject to Phosphoserine. Positions 32–46 (AAAAAAEAPDETAQA) are enriched in low complexity. A phosphoserine mark is found at Ser73 and Ser75. Tyr82 carries the post-translational modification Phosphotyrosine. 2 EF-hand domains span residues 91–126 (KQIK…LGAP) and 127–162 (QTHL…AAAG). Residues Asp104, Asp108, Glu115, Asp140, Asp142, Asp144, Lys146, and Glu151 each coordinate Ca(2+). Position 232 is an N6-acetyllysine (Lys232).

In terms of assembly, interacts with CASP9; with inactive form.

It localises to the membrane raft. Its function is as follows. May regulate B-cell receptor (BCR)-induced immature and primary B-cell apoptosis. Plays a role as negative regulator of the canonical NF-kappa-B-activating branch. Controls spontaneous apoptosis through the regulation of BCL2L1 abundance. The chain is EF-hand domain-containing protein D2 (Efhd2) from Rattus norvegicus (Rat).